Reading from the N-terminus, the 139-residue chain is MKKTMLLNAQLSRCIASVGHTESLTICDAGLPIPLSVERIDLALTAGVPSFLQTLNVVTNEMYVERVVIAEEIKEKNPEILTALLTQLQQLESHQGNQIQVEFVSHETFKKFTLESKAIVRTGECSPYANVILYSGVPF.

His-20 (proton donor) is an active-site residue. Substrate contacts are provided by residues Asp-28, His-106, and 128-130 (YAN).

The protein belongs to the RbsD / FucU family. RbsD subfamily. Homodecamer.

The protein localises to the cytoplasm. The catalysed reaction is beta-D-ribopyranose = beta-D-ribofuranose. It functions in the pathway carbohydrate metabolism; D-ribose degradation; D-ribose 5-phosphate from beta-D-ribopyranose: step 1/2. Its function is as follows. Catalyzes the interconversion of beta-pyran and beta-furan forms of D-ribose. In Haemophilus influenzae (strain 86-028NP), this protein is D-ribose pyranase.